The sequence spans 364 residues: Putative transport protein BUsg_115 (364 aa).

Helical transmembrane passes span 18–38, 40–60, 65–85, 161–181, 215–235, 243–263, 280–300, 309–329, and 331–351; these read IFII…ILGF, WASM…KFLG, VAVI…IVFL, GLFI…YWNG, ALGV…GLLI, LLMI…PILI, LLLI…PFFI, FLIL…GLFI, and PVVL…ISIA.

This sequence belongs to the autoinducer-2 exporter (AI-2E) (TC 2.A.86) family.

The protein resides in the cell membrane. The protein is Putative transport protein BUsg_115 of Buchnera aphidicola subsp. Schizaphis graminum (strain Sg).